A 527-amino-acid chain; its full sequence is Inosine-5'-monophosphate dehydrogenase (527 aa).

2 consecutive CBS domains span residues 121–183 (FILD…VTAV) and 184–240 (MSTD…PLAS). NAD(+)-binding positions include 277-279 (DSS) and 327-329 (GMG). Residues G329 and G331 each coordinate K(+). Residue S332 participates in IMP binding. C334 lines the K(+) pocket. C334 serves as the catalytic Thioimidate intermediate. IMP contacts are provided by residues 367–369 (DGG) and 390–391 (GS). R440 functions as the Proton acceptor in the catalytic mechanism. Q452 serves as a coordination point for IMP. Residues 506 to 527 (ASAQTEGNVHGLHSHEKKLYSS) form a disordered region. The K(+) site is built by E511 and G512. Residues 518 to 527 (HSHEKKLYSS) show a composition bias toward basic and acidic residues.

The protein belongs to the IMPDH/GMPR family. As to quaternary structure, homotetramer. The cofactor is K(+).

Its subcellular location is the cytoplasm. It catalyses the reaction IMP + NAD(+) + H2O = XMP + NADH + H(+). The protein operates within purine metabolism; XMP biosynthesis via de novo pathway; XMP from IMP: step 1/1. With respect to regulation, mycophenolic acid (MPA) is a non-competitive inhibitor that prevents formation of the closed enzyme conformation by binding to the same site as the amobile flap. In contrast, mizoribine monophosphate (MZP) is a competitive inhibitor that induces the closed conformation. MPA is a potent inhibitor of mammalian IMPDHs but a poor inhibitor of the bacterial enzymes. MZP is a more potent inhibitor of bacterial IMPDH. Its function is as follows. Catalyzes the conversion of inosine 5'-phosphate (IMP) to xanthosine 5'-phosphate (XMP), the first committed and rate-limiting step in the de novo synthesis of guanine nucleotides, and therefore plays an important role in the regulation of cell growth. Part of the gene cluster that mediates the biosynthesis of mycophenolic acid (MPA), the first isolated antibiotic natural product in the world. Does not play a role in the biosynthesis of MPA, but is involved in self resistance to MPA, since MPA acts as an inhibitor of IMP dehydrogenases. The polypeptide is Inosine-5'-monophosphate dehydrogenase (Penicillium brevicompactum).